A 383-amino-acid chain; its full sequence is Probable disease resistance protein At4g19060 (383 aa).

A disordered region spans residues 36–84 (YEKWSSGKQRGSSSKHGNQSTHGDSSPTRNSSGSSKKGRPKANRVETSS). Residues 41-70 (SGKQRGSSSKHGNQSTHGDSSPTRNSSGSS) show a composition bias toward polar residues. 2 consecutive NB-ARC domains span residues 75–184 (PKAN…MFKH) and 207–281 (VKEK…LAKA). 121–128 (GKYGVGKT) is an ATP binding site.

Possible disease resistance protein. The chain is Probable disease resistance protein At4g19060 from Arabidopsis thaliana (Mouse-ear cress).